We begin with the raw amino-acid sequence, 988 residues long: Transcriptional regulator of yeast form adherence 5 (988 aa).

2 consecutive C2H2-type zinc fingers follow at residues 7 to 29 (YICA…ERSH) and 35 to 59 (FHCL…TVHH). Positions 59–83 (HTNLNPSTLPSNKSLKNPTTNPLDL) are enriched in polar residues. Disordered regions lie at residues 59–129 (HTNL…SSVG) and 174–229 (SMES…SNNN). Residues 84 to 106 (SNNEGTTTTTKTGNRKNNSNKNG) show a composition bias toward low complexity. 2 stretches are compositionally biased toward polar residues: residues 113-129 (TNPN…SSVG) and 174-208 (SMES…EIVL).

The protein resides in the nucleus. Functionally, transcription factor required for yeast cell adherence to silicone substrate. The protein is Transcriptional regulator of yeast form adherence 5 (TRY5) of Candida albicans (strain SC5314 / ATCC MYA-2876) (Yeast).